A 761-amino-acid chain; its full sequence is MEEKYGGDARPGPGGGLGPVDVPSARLTRYILLLCLTKCLKAVGLFESYDLLKAVHIVQFIFILKLGTAFFMVLFQKPFSSGKPITKHQWIKIFKHAVAGCIISLLWFFGLTLCGPLRTLLLFEHSDIVVISLLSVLFTSSGGGPAKTRGAAFFIIAVICLLLFDNDDLMAKMAEHPEGHHDSALTHMLYTAIAFLGVADHKGGVLLLVLALCCKVGFHTASRKLSIDVGGAKRLQALSQLVSVFLLCPWVIVLSVTTESKVESWFSLIMPFTTVIFFVMILDFYMDSVCSVKMDVSKCARYGSFPIFISALLFGNFWTHPITDQLRAMNRAAHQESTEHVLSGGVVVSAVFFILSANILSSPSKRGQKGTLIGYSPEGTPLYHFMGDAFQHSSQSVPRFIKDSLKQVLEESDSRQIFYFLCLNLLFTFVELFYGVLTNSLGLISDGFHMLFDCSALVMGLFAALMSRWKATRIFSYGYGRIEILSGFINGLFLIVIAFFVFMESVARLIDPPELDTNMLTPVSVGGLIVNLIGICAFSHAHSHGHGASQGNCHSDHGHSHHAHGHGHDHGHSHGFTGGGMNANMRGVFLHVLADTLGSIGVIVSTVLIEQFGWFIADPLCSLFIAVLIFLSVIPLIKDACQVLLLRLPPDHEKELHIALEKIQKIEGLISYRDPHFWRHSASIVAGTIHIQVTSEVLEQRIVQQVTGILKDAGVNNLTIQVEKEAYFQHMSGLSTGFHDVLAMTKQMESLKYCKDGTYIM.

M1 is modified (N-acetylmethionine). The Cytoplasmic portion of the chain corresponds to 1-29; sequence MEEKYGGDARPGPGGGLGPVDVPSARLTR. The helical transmembrane segment at 30 to 46 threads the bilayer; that stretch reads YILLLCLTKCLKAVGLF. The Lumenal segment spans residues 47–54; sequence ESYDLLKA. The chain crosses the membrane as a helical span at residues 55–75; it reads VHIVQFIFILKLGTAFFMVLF. Topologically, residues 76-96 are cytoplasmic; the sequence is QKPFSSGKPITKHQWIKIFKH. The chain crosses the membrane as a helical span at residues 97–117; sequence AVAGCIISLLWFFGLTLCGPL. R118 is a topological domain (lumenal). Residues 119 to 139 form a helical membrane-spanning segment; it reads TLLLFEHSDIVVISLLSVLFT. Topologically, residues 140-150 are cytoplasmic; that stretch reads SSGGGPAKTRG. Residues 151–171 traverse the membrane as a helical segment; that stretch reads AAFFIIAVICLLLFDNDDLMA. The Lumenal portion of the chain corresponds to 172–191; sequence KMAEHPEGHHDSALTHMLYT. Residues 192–212 traverse the membrane as a helical segment; sequence AIAFLGVADHKGGVLLLVLAL. At 213-236 the chain is on the cytoplasmic side; sequence CCKVGFHTASRKLSIDVGGAKRLQ. A helical transmembrane segment spans residues 237–257; that stretch reads ALSQLVSVFLLCPWVIVLSVT. Residues 258-264 lie on the Lumenal side of the membrane; the sequence is TESKVES. The helical transmembrane segment at 265 to 285 threads the bilayer; it reads WFSLIMPFTTVIFFVMILDFY. The Cytoplasmic portion of the chain corresponds to 286–301; it reads MDSVCSVKMDVSKCAR. The helical transmembrane segment at 302–322 threads the bilayer; that stretch reads YGSFPIFISALLFGNFWTHPI. The Lumenal portion of the chain corresponds to 323-340; that stretch reads TDQLRAMNRAAHQESTEH. The helical transmembrane segment at 341–361 threads the bilayer; sequence VLSGGVVVSAVFFILSANILS. Residues 362–416 are Cytoplasmic-facing; sequence SPSKRGQKGTLIGYSPEGTPLYHFMGDAFQHSSQSVPRFIKDSLKQVLEESDSRQ. Residues 417-437 form a helical membrane-spanning segment; the sequence is IFYFLCLNLLFTFVELFYGVL. The tract at residues 418-636 is mediates homodimerization with SLC30A6; that stretch reads FYFLCLNLLF…VLIFLSVIPL (219 aa). At 438 to 446 the chain is on the lumenal side; the sequence is TNSLGLISD. The chain crosses the membrane as a helical span at residues 447 to 467; it reads GFHMLFDCSALVMGLFAALMS. Zn(2+) contacts are provided by H449 and D453. The Cytoplasmic segment spans residues 468-481; sequence RWKATRIFSYGYGR. The chain crosses the membrane as a helical span at residues 482–502; the sequence is IEILSGFINGLFLIVIAFFVF. Over 503 to 518 the chain is Lumenal; that stretch reads MESVARLIDPPELDTN. The chain crosses the membrane as a helical span at residues 519–539; sequence MLTPVSVGGLIVNLIGICAFS. The his-rich loop; required for zinc transport stretch occupies residues 540 to 574; that stretch reads HAHSHGHGASQGNCHSDHGHSHHAHGHGHDHGHSH. The Cytoplasmic segment spans residues 540 to 588; it reads HAHSHGHGASQGNCHSDHGHSHHAHGHGHDHGHSHGFTGGGMNANMRGV. Positions 549–576 are disordered; sequence SQGNCHSDHGHSHHAHGHGHDHGHSHGF. Residues 589 to 609 traverse the membrane as a helical segment; sequence FLHVLADTLGSIGVIVSTVLI. The Zn(2+) site is built by H591 and D595. Over 610–613 the chain is Lumenal; it reads EQFG. The helical transmembrane segment at 614–634 threads the bilayer; it reads WFIADPLCSLFIAVLIFLSVI. Residues 635-761 are Cytoplasmic-facing; it reads PLIKDACQVL…KYCKDGTYIM (127 aa).

This sequence belongs to the cation diffusion facilitator (CDF) transporter (TC 2.A.4) family. SLC30A subfamily. Heterodimer with SLC30A6/ZNT6; form a functional zinc ion transmembrane transporter. Post-translationally, could homodimerize through the formation of dityrosine bonds upon oxidative stress. Ubiquitously expressed.

The protein resides in the golgi apparatus. It localises to the golgi stack membrane. Its subcellular location is the cytoplasmic vesicle. It is found in the COPII-coated vesicle membrane. The protein localises to the secretory vesicle membrane. The protein resides in the trans-Golgi network membrane. The enzyme catalyses Zn(2+)(in) + 2 H(+)(out) = Zn(2+)(out) + 2 H(+)(in). Its function is as follows. Together with SLC30A6 forms a functional proton-coupled zinc ion antiporter mediating zinc entry into the lumen of organelles along the secretory pathway. By contributing to zinc ion homeostasis within the early secretory pathway, regulates the activation and folding of enzymes like alkaline phosphatases and enzymes involved in phosphatidylinositol glycan anchor biosynthesis. Through the transport of zinc into secretory granules of pancreatic beta-cells, plays an important role in the storage and secretion of insulin. This chain is Proton-coupled zinc antiporter SLC30A5, found in Mus musculus (Mouse).